A 1939-amino-acid polypeptide reads, in one-letter code: Myosin heavy chain, skeletal muscle, adult (1939 aa).

An N-acetylalanine modification is found at A2. Residues 34–83 enclose the Myosin N-terminal SH3-like domain; that stretch reads DAKSSVFVVHPKESFVKGTIQSKEGGKVTVKTEGGETLTVKEDQVFSMNP. An N6-methyllysine modification is found at K36. Positions 87–781 constitute a Myosin motor domain; the sequence is DKIEDMAMMT…LLGLLEEMRD (695 aa). N6,N6,N6-trimethyllysine is present on K131. 180 to 187 serves as a coordination point for ATP; the sequence is GESGAGKT. K552 is modified (N6,N6,N6-trimethyllysine). The segment at 658-680 is actin-binding; it reads LNKLMANLRSTHPHFVRCIIPNE. At H756 the chain carries Pros-methylhistidine. The segment at 760-774 is actin-binding; it reads RFGHTKVFFKAGLLG. Positions 784–813 constitute an IQ domain; that stretch reads LAEIITRTQARCRGFLMRVEYRRMVERRES. The tract at residues 839 to 841 is hinge; that stretch reads IKP. Positions 842-1939 form a coiled coil; sequence LLKSAESEKE…IHGKKIEEEE (1098 aa).

This sequence belongs to the TRAFAC class myosin-kinesin ATPase superfamily. Myosin family. As to quaternary structure, muscle myosin is a hexameric protein that consists of 2 heavy chain subunits (MHC), 2 alkali light chain subunits (MLC) and 2 regulatory light chain subunits (MLC-2).

The protein localises to the cytoplasm. It is found in the myofibril. Its function is as follows. Muscle contraction. Myosin is a protein that binds to F-actin and has ATPase activity that is activated by F-actin. This Gallus gallus (Chicken) protein is Myosin heavy chain, skeletal muscle, adult.